Consider the following 183-residue polypeptide: MRLFGYARVSTSQQSLDIQVRALKDAGVKANRIFTDKASGSSSDRKGLDLLRMKVEEGDVILVKKLDRLGRDTADMIQLIKEFDAQGVSIRFIDDGISTDGEMGKMVVTILSAVAQAERQRILERTNEGRQEAMAKGVVFGRKRKIDRDAVLNMWQQGLGASHISKTMNIARSTVYKVINESN.

One can recognise a Resolvase/invertase-type recombinase catalytic domain in the interval 2–137 (RLFGYARVST…EGRQEAMAKG (136 aa)). Serine 10 (O-(5'-phospho-DNA)-serine intermediate) is an active-site residue. A DNA-binding region (H-T-H motif) is located at residues 161–180 (ASHISKTMNIARSTVYKVIN).

The protein belongs to the site-specific recombinase resolvase family.

Its function is as follows. This protein catalyzes the site-specific recombination of the transposon and also regulates its frequency of transposition. The chain is Transposon gamma-delta resolvase (tnpR) from Escherichia coli (strain K12).